The following is a 138-amino-acid chain: Large ribosomal subunit protein uL16 (138 aa).

The segment covering 1–17 (MLQPKRTKFRKQHKGRN) has biased composition (basic residues). The interval 1-22 (MLQPKRTKFRKQHKGRNRGVAT) is disordered.

It belongs to the universal ribosomal protein uL16 family. In terms of assembly, part of the 50S ribosomal subunit.

Its function is as follows. Binds 23S rRNA and is also seen to make contacts with the A and possibly P site tRNAs. The chain is Large ribosomal subunit protein uL16 from Acidithiobacillus ferrooxidans (strain ATCC 23270 / DSM 14882 / CIP 104768 / NCIMB 8455) (Ferrobacillus ferrooxidans (strain ATCC 23270)).